The following is a 353-amino-acid chain: Immune-associated nucleotide-binding protein 8 (353 aa).

A compositionally biased stretch (polar residues) spans 1–10; it reads MANDQKNSES. A disordered region spans residues 1-43; sequence MANDQKNSESFPAKEDHKKDDAAAPAEVDHKDEFSASQPHPVE. The span at 12-34 shows a compositional bias: basic and acidic residues; sequence PAKEDHKKDDAAAPAEVDHKDEF. Residues 40 to 248 form the AIG1-type G domain; sequence HPVENIVLVG…YTDEMYHMIK (209 aa). A G1 region spans residues 49-56; it reads GRTGNGKS. GTP contacts are provided by residues 49 to 57 and Ser-70; that span reads GRTGNGKSA. The segment at 76–80 is G2; that stretch reads GVTME. The tract at residues 98–101 is G3; that stretch reads DTPG. The interval 168–171 is G4; sequence TGGD. The interval 207 to 209 is G5; sequence DNK. Residue Asn-208 participates in GTP binding. A coiled-coil region spans residues 244–291; that stretch reads YHMIKEENERHKKEQEELESKGHSEEQLAALMKELQIMNERNLKAMAE.

It belongs to the TRAFAC class TrmE-Era-EngA-EngB-Septin-like GTPase superfamily. AIG1/Toc34/Toc159-like paraseptin GTPase family. IAN subfamily. As to expression, mainly expressed in leaves.

This chain is Immune-associated nucleotide-binding protein 8, found in Arabidopsis thaliana (Mouse-ear cress).